Consider the following 472-residue polypeptide: Tubulin gamma chain (472 aa).

142 to 148 (AGGTGSG) contacts GTP.

It belongs to the tubulin family.

Its subcellular location is the cytoplasm. The protein localises to the cytoskeleton. It is found in the microtubule organizing center. Its function is as follows. Tubulin is the major constituent of microtubules. The gamma chain is found at microtubule organizing centers (MTOC) such as the spindle poles, suggesting that it is involved in the minus-end nucleation of microtubule assembly. In Anemia phyllitidis (Fern), this protein is Tubulin gamma chain (TUBG).